The following is a 650-amino-acid chain: DNA mismatch repair protein MutL (650 aa).

Residues 374 to 420 form a disordered region; the sequence is SSLPDTQRSQRQPEKAASGQRSSVDAGLSQGSSAHRASQTGLGQSGN. Residues 392-420 are compositionally biased toward polar residues; the sequence is GQRSSVDAGLSQGSSAHRASQTGLGQSGN.

This sequence belongs to the DNA mismatch repair MutL/HexB family.

Its function is as follows. This protein is involved in the repair of mismatches in DNA. It is required for dam-dependent methyl-directed DNA mismatch repair. May act as a 'molecular matchmaker', a protein that promotes the formation of a stable complex between two or more DNA-binding proteins in an ATP-dependent manner without itself being part of a final effector complex. The polypeptide is DNA mismatch repair protein MutL (Shewanella amazonensis (strain ATCC BAA-1098 / SB2B)).